We begin with the raw amino-acid sequence, 534 residues long: NEDD8-activating enzyme E1 regulatory subunit (534 aa).

Ala-2 bears the N-acetylalanine mark. An N6-acetyllysine mark is found at Lys-6 and Lys-341. The interval 331-344 (DMIADSGKYIKLQN) is interaction with UBA3.

The protein belongs to the ubiquitin-activating E1 family. ULA1 subfamily. As to quaternary structure, heterodimer of UBA3 and NAE1. The complex binds NEDD8 and UBE2M. Binds APP and TP53BP2. Ubiquitinated by TRIP12, leading to its degradation by the proteasome. As to expression, ubiquitous in fetal tissues. Expressed throughout the adult brain.

The protein localises to the cell membrane. It functions in the pathway protein modification; protein neddylation. Binding of TP53BP2 to the regulatory subunit NAE1 decreases neddylation activity. In terms of biological role, regulatory subunit of the dimeric UBA3-NAE1 E1 enzyme. E1 activates NEDD8 by first adenylating its C-terminal glycine residue with ATP, thereafter linking this residue to the side chain of the catalytic cysteine, yielding a NEDD8-UBA3 thioester and free AMP. E1 finally transfers NEDD8 to the catalytic cysteine of UBE2M. Necessary for cell cycle progression through the S-M checkpoint. Overexpression of NAE1 causes apoptosis through deregulation of NEDD8 conjugation. The covalent attachment of NEDD8 to target proteins is known as 'neddylation' and the process is involved in the regulation of cell growth, viability and development. The chain is NEDD8-activating enzyme E1 regulatory subunit (NAE1) from Homo sapiens (Human).